Consider the following 127-residue polypeptide: Small ribosomal subunit protein uS17m (127 aa).

The protein belongs to the universal ribosomal protein uS17 family.

The protein localises to the mitochondrion. The chain is Small ribosomal subunit protein uS17m (mrps17) from Dictyostelium discoideum (Social amoeba).